The sequence spans 458 residues: D-inositol 3-phosphate glycosyltransferase (458 aa).

Residues 1–29 form a disordered region; it reads MRADRPGHRSRGINPGPGMFTLVGPDERD. H47 is a binding site for 1D-myo-inositol 3-phosphate. UDP-N-acetyl-alpha-D-glucosamine-binding positions include 53-54 and G61; that span reads QP. 1D-myo-inositol 3-phosphate is bound by residues 58-63, K116, Y149, T173, and R193; that span reads DAGGMN. UDP-N-acetyl-alpha-D-glucosamine contacts are provided by R267, K272, and V339. Residue A351 participates in Mg(2+) binding. 2 residues coordinate UDP-N-acetyl-alpha-D-glucosamine: E361 and E369. T375 is a Mg(2+) binding site.

It belongs to the glycosyltransferase group 1 family. MshA subfamily. As to quaternary structure, homodimer.

It catalyses the reaction 1D-myo-inositol 3-phosphate + UDP-N-acetyl-alpha-D-glucosamine = 1D-myo-inositol 2-acetamido-2-deoxy-alpha-D-glucopyranoside 3-phosphate + UDP + H(+). Catalyzes the transfer of a N-acetyl-glucosamine moiety to 1D-myo-inositol 3-phosphate to produce 1D-myo-inositol 2-acetamido-2-deoxy-glucopyranoside 3-phosphate in the mycothiol biosynthesis pathway. The protein is D-inositol 3-phosphate glycosyltransferase of Nocardioides sp. (strain ATCC BAA-499 / JS614).